Here is a 997-residue protein sequence, read N- to C-terminus: LPS-assembly protein LptD (997 aa).

A signal peptide spans Met1–Ala27.

It belongs to the LptD family. Component of the lipopolysaccharide transport and assembly complex. Interacts with LptE and LptA.

It localises to the cell outer membrane. Functionally, together with LptE, is involved in the assembly of lipopolysaccharide (LPS) at the surface of the outer membrane. This chain is LPS-assembly protein LptD, found in Psychrobacter cryohalolentis (strain ATCC BAA-1226 / DSM 17306 / VKM B-2378 / K5).